The primary structure comprises 93 residues: DNA/RNA-binding protein Alba 2 (93 aa).

The protein belongs to the histone-like Alba family.

The protein localises to the cytoplasm. It is found in the chromosome. Its function is as follows. Binds double-stranded DNA tightly but without sequence specificity. Involved in DNA compaction. This Methanopyrus kandleri (strain AV19 / DSM 6324 / JCM 9639 / NBRC 100938) protein is DNA/RNA-binding protein Alba 2.